A 334-amino-acid chain; its full sequence is GTP 3',8-cyclase (334 aa).

The 226-residue stretch at 11 to 236 (GFNRKIDYLR…ESTESSMGPA (226 aa)) folds into the Radical SAM core domain. Arg20 provides a ligand contact to GTP. [4Fe-4S] cluster is bound by residues Cys27 and Cys31. An S-adenosyl-L-methionine-binding site is contributed by Tyr33. Cys34 is a binding site for [4Fe-4S] cluster. Arg69 provides a ligand contact to GTP. S-adenosyl-L-methionine is bound at residue Gly73. Residue Thr100 participates in GTP binding. Ser124 serves as a coordination point for S-adenosyl-L-methionine. Lys161 provides a ligand contact to GTP. Position 195 (Met195) interacts with S-adenosyl-L-methionine. [4Fe-4S] cluster-binding residues include Cys260 and Cys263. 265 to 267 (RVR) serves as a coordination point for GTP. A [4Fe-4S] cluster-binding site is contributed by Cys277.

Belongs to the radical SAM superfamily. MoaA family. In terms of assembly, monomer and homodimer. The cofactor is [4Fe-4S] cluster.

The enzyme catalyses GTP + AH2 + S-adenosyl-L-methionine = (8S)-3',8-cyclo-7,8-dihydroguanosine 5'-triphosphate + 5'-deoxyadenosine + L-methionine + A + H(+). It functions in the pathway cofactor biosynthesis; molybdopterin biosynthesis. Catalyzes the cyclization of GTP to (8S)-3',8-cyclo-7,8-dihydroguanosine 5'-triphosphate. The protein is GTP 3',8-cyclase of Pseudomonas putida (strain ATCC 47054 / DSM 6125 / CFBP 8728 / NCIMB 11950 / KT2440).